Reading from the N-terminus, the 985-residue chain is Probable beta-galactosidase C (985 aa).

A signal peptide spans 1-23 (MRILSLLFLLLLGFLAGNRVVSA). Substrate contacts are provided by Tyr82, Asn127, Ala128, Glu129, and Asn187. Residue Glu188 is the Proton donor of the active site. Tyr251 lines the substrate pocket. An intrachain disulfide couples Cys257 to Cys304. Asn276 is a glycosylation site (N-linked (GlcNAc...) asparagine). Residue Glu287 is the Nucleophile of the active site. Tyr353 is a binding site for substrate. N-linked (GlcNAc...) asparagine glycosylation is found at Asn391, Asn434, Asn517, Asn602, Asn677, Asn715, Asn720, and Asn759.

This sequence belongs to the glycosyl hydrolase 35 family.

Its subcellular location is the secreted. It catalyses the reaction Hydrolysis of terminal non-reducing beta-D-galactose residues in beta-D-galactosides.. Cleaves beta-linked terminal galactosyl residues from gangliosides, glycoproteins, and glycosaminoglycans. This chain is Probable beta-galactosidase C (lacC), found in Aspergillus clavatus (strain ATCC 1007 / CBS 513.65 / DSM 816 / NCTC 3887 / NRRL 1 / QM 1276 / 107).